The sequence spans 103 residues: Large ribosomal subunit protein bL21 (103 aa).

This sequence belongs to the bacterial ribosomal protein bL21 family. Part of the 50S ribosomal subunit. Contacts protein L20.

Its function is as follows. This protein binds to 23S rRNA in the presence of protein L20. The polypeptide is Large ribosomal subunit protein bL21 (Aeromonas salmonicida (strain A449)).